Here is a 435-residue protein sequence, read N- to C-terminus: Enolase (435 aa).

Glutamine 163 is a binding site for (2R)-2-phosphoglycerate. Glutamate 205 acts as the Proton donor in catalysis. Mg(2+)-binding residues include aspartate 243, glutamate 292, and aspartate 319. Positions 344, 373, 374, and 395 each coordinate (2R)-2-phosphoglycerate. Lysine 344 (proton acceptor) is an active-site residue.

Belongs to the enolase family. Mg(2+) serves as cofactor.

The protein localises to the cytoplasm. The protein resides in the secreted. Its subcellular location is the cell surface. It catalyses the reaction (2R)-2-phosphoglycerate = phosphoenolpyruvate + H2O. It participates in carbohydrate degradation; glycolysis; pyruvate from D-glyceraldehyde 3-phosphate: step 4/5. In terms of biological role, catalyzes the reversible conversion of 2-phosphoglycerate (2-PG) into phosphoenolpyruvate (PEP). It is essential for the degradation of carbohydrates via glycolysis. This is Enolase from Streptococcus uberis (strain ATCC BAA-854 / 0140J).